The sequence spans 695 residues: Elongation factor G 1 (695 aa).

The tr-type G domain occupies 6-281 (TRYRNIGIFA…AVVDYLPNPK (276 aa)). GTP contacts are provided by residues 15–22 (AHVDAGKT), 79–83 (DTPGH), and 133–136 (NKLD).

It belongs to the TRAFAC class translation factor GTPase superfamily. Classic translation factor GTPase family. EF-G/EF-2 subfamily.

It is found in the cytoplasm. Catalyzes the GTP-dependent ribosomal translocation step during translation elongation. During this step, the ribosome changes from the pre-translocational (PRE) to the post-translocational (POST) state as the newly formed A-site-bound peptidyl-tRNA and P-site-bound deacylated tRNA move to the P and E sites, respectively. Catalyzes the coordinated movement of the two tRNA molecules, the mRNA and conformational changes in the ribosome. This Synechocystis sp. (strain ATCC 27184 / PCC 6803 / Kazusa) protein is Elongation factor G 1 (fusA).